A 96-amino-acid chain; its full sequence is Putative pterin-4-alpha-carbinolamine dehydratase (96 aa).

It belongs to the pterin-4-alpha-carbinolamine dehydratase family.

It catalyses the reaction (4aS,6R)-4a-hydroxy-L-erythro-5,6,7,8-tetrahydrobiopterin = (6R)-L-erythro-6,7-dihydrobiopterin + H2O. This chain is Putative pterin-4-alpha-carbinolamine dehydratase, found in Paraburkholderia phytofirmans (strain DSM 17436 / LMG 22146 / PsJN) (Burkholderia phytofirmans).